A 65-amino-acid chain; its full sequence is Large ribosomal subunit protein uL29 (65 aa).

This sequence belongs to the universal ribosomal protein uL29 family.

This Psychrobacter arcticus (strain DSM 17307 / VKM B-2377 / 273-4) protein is Large ribosomal subunit protein uL29.